We begin with the raw amino-acid sequence, 891 residues long: DNA mismatch repair protein MutS (891 aa).

646 to 653 (GPNMAGKS) is a binding site for ATP.

It belongs to the DNA mismatch repair MutS family.

Functionally, this protein is involved in the repair of mismatches in DNA. It is possible that it carries out the mismatch recognition step. This protein has a weak ATPase activity. This chain is DNA mismatch repair protein MutS, found in Rickettsia canadensis (strain McKiel).